The primary structure comprises 206 residues: dITP/XTP pyrophosphatase (206 aa).

Position 7-12 (7-12 (SCHGYK)) interacts with substrate. Catalysis depends on Asp-70, which acts as the Proton acceptor. Asp-70 contacts Mg(2+). Residues Thr-71, 154-157 (FGYD), Lys-177, and 182-183 (HR) contribute to the substrate site.

The protein belongs to the HAM1 NTPase family. In terms of assembly, homodimer. Mg(2+) serves as cofactor.

It carries out the reaction XTP + H2O = XMP + diphosphate + H(+). The catalysed reaction is dITP + H2O = dIMP + diphosphate + H(+). The enzyme catalyses ITP + H2O = IMP + diphosphate + H(+). Pyrophosphatase that catalyzes the hydrolysis of nucleoside triphosphates to their monophosphate derivatives, with a high preference for the non-canonical purine nucleotides XTP (xanthosine triphosphate), dITP (deoxyinosine triphosphate) and ITP. Seems to function as a house-cleaning enzyme that removes non-canonical purine nucleotides from the nucleotide pool, thus preventing their incorporation into DNA/RNA and avoiding chromosomal lesions. This chain is dITP/XTP pyrophosphatase, found in Chlamydia caviae (strain ATCC VR-813 / DSM 19441 / 03DC25 / GPIC) (Chlamydophila caviae).